A 929-amino-acid chain; its full sequence is Pyruvate dehydrogenase E1 component (929 aa).

Residue Lys-375 forms an Isoglutamyl lysine isopeptide (Lys-Gln) (interchain with Q-Cter in protein Pup) linkage.

As to quaternary structure, homodimer. Part of the PDH complex, consisting of multiple copies of AceE (E1), DlaT (E2) and Lpd (E3). Requires Mg(2+) as cofactor. It depends on thiamine diphosphate as a cofactor.

It carries out the reaction N(6)-[(R)-lipoyl]-L-lysyl-[protein] + pyruvate + H(+) = N(6)-[(R)-S(8)-acetyldihydrolipoyl]-L-lysyl-[protein] + CO2. Its function is as follows. Component of the pyruvate dehydrogenase (PDH) complex, that catalyzes the overall conversion of pyruvate to acetyl-CoA and CO(2). AceE has reductase activity with pyruvate but does not react with 2-oxoglutarate. In Mycolicibacterium smegmatis (strain ATCC 700084 / mc(2)155) (Mycobacterium smegmatis), this protein is Pyruvate dehydrogenase E1 component (aceE).